Reading from the N-terminus, the 444-residue chain is Ribosomal protein uS12 methylthiotransferase RimO (444 aa).

The MTTase N-terminal domain occupies 4 to 120 (KSAALVSLGC…LKSFIRDHEA (117 aa)). Residues cysteine 13, cysteine 49, cysteine 83, cysteine 157, cysteine 161, and cysteine 164 each coordinate [4Fe-4S] cluster. The Radical SAM core domain maps to 143 to 371 (VEGRSSAYVK…LELQRGISRR (229 aa)). The TRAM domain maps to 374–442 (ESLVGRVLPV…DYDVEAELLS (69 aa)).

The protein belongs to the methylthiotransferase family. RimO subfamily. The cofactor is [4Fe-4S] cluster.

It localises to the cytoplasm. The enzyme catalyses L-aspartate(89)-[ribosomal protein uS12]-hydrogen + (sulfur carrier)-SH + AH2 + 2 S-adenosyl-L-methionine = 3-methylsulfanyl-L-aspartate(89)-[ribosomal protein uS12]-hydrogen + (sulfur carrier)-H + 5'-deoxyadenosine + L-methionine + A + S-adenosyl-L-homocysteine + 2 H(+). Its function is as follows. Catalyzes the methylthiolation of an aspartic acid residue of ribosomal protein uS12. This is Ribosomal protein uS12 methylthiotransferase RimO from Syntrophobacter fumaroxidans (strain DSM 10017 / MPOB).